The following is a 462-amino-acid chain: Zinc transporter 6-B (462 aa).

The Cytoplasmic segment spans residues 1-33 (MGTIYLFRKTQRSLLGKLTQEFRLVTADRRSWK). A helical membrane pass occupies residues 34–54 (ILLFGAINVVCTGFLLTWCSS). Residues 55–64 (TNSMALTAYT) are Extracellular-facing. A helical transmembrane segment spans residues 65–85 (YLTIFDLFSLITSLISYWVMM). At 86 to 98 (KKPSPTYSFGFER) the chain is on the cytoplasmic side. Residues 99–119 (LEVLAVFASTVLAQLGALFIL) traverse the membrane as a helical segment. Residues 120 to 134 (KESAERFLEQPEIHT) are Extracellular-facing. A helical transmembrane segment spans residues 135 to 155 (GRLLVGTFVALFFNLFTMLSI). Residues 156 to 200 (RNKPFAYVSEAASTSWLQEHVADLSRSLCGVIPGLSSIFLPRMNP) lie on the Cytoplasmic side of the membrane. A helical membrane pass occupies residues 201–221 (FVLIDIAGALALCITYMLIEI). At 222 to 223 (NN) the chain is on the extracellular side. Residues 224–244 (YFAVDTASAIAIAVMTFGTMY) form a helical membrane-spanning segment. Over 245–462 (PMSVYSGKVL…TPGQFTQFRQ (218 aa)) the chain is Cytoplasmic.

It belongs to the cation diffusion facilitator (CDF) transporter (TC 2.A.4) family. SLC30A subfamily. In terms of assembly, heterodimer with SLC30A5; form a functional zinc ion transmembrane transporter.

The protein resides in the golgi apparatus. Its subcellular location is the trans-Golgi network membrane. Its function is as follows. Has probably no intrinsic transporter activity but together with SLC30A5 forms a functional zinc ion:proton antiporter heterodimer, mediating zinc entry into the lumen of organelles along the secretory pathway. As part of that zinc ion:proton antiporter, contributes to zinc ion homeostasis within the early secretory pathway and regulates the activation and folding of enzymes like alkaline phosphatases and enzymes involved in phosphatidylinositol glycan anchor biosynthesis. This chain is Zinc transporter 6-B (slc30a6-b), found in Xenopus laevis (African clawed frog).